The sequence spans 342 residues: 4-hydroxythreonine-4-phosphate dehydrogenase (342 aa).

Positions 139 and 140 each coordinate substrate. Residues histidine 174, histidine 219, and histidine 274 each contribute to the a divalent metal cation site. Substrate is bound by residues lysine 282, asparagine 291, and arginine 300.

It belongs to the PdxA family. As to quaternary structure, homodimer. The cofactor is Zn(2+). It depends on Mg(2+) as a cofactor. Requires Co(2+) as cofactor.

The protein resides in the cytoplasm. The enzyme catalyses 4-(phosphooxy)-L-threonine + NAD(+) = 3-amino-2-oxopropyl phosphate + CO2 + NADH. It participates in cofactor biosynthesis; pyridoxine 5'-phosphate biosynthesis; pyridoxine 5'-phosphate from D-erythrose 4-phosphate: step 4/5. Its function is as follows. Catalyzes the NAD(P)-dependent oxidation of 4-(phosphooxy)-L-threonine (HTP) into 2-amino-3-oxo-4-(phosphooxy)butyric acid which spontaneously decarboxylates to form 3-amino-2-oxopropyl phosphate (AHAP). The sequence is that of 4-hydroxythreonine-4-phosphate dehydrogenase from Mesorhizobium japonicum (strain LMG 29417 / CECT 9101 / MAFF 303099) (Mesorhizobium loti (strain MAFF 303099)).